The sequence spans 160 residues: Zinc finger A20 and AN1 domain-containing stress-associated protein 5 (160 aa).

The A20-type zinc finger occupies 20-54 (TTTTTLCTNNCGVTANPATNNMCQKCFNASLVSAA). Cysteine 26, cysteine 30, cysteine 42, cysteine 45, cysteine 101, cysteine 104, cysteine 115, cysteine 117, cysteine 122, histidine 125, histidine 131, and cysteine 133 together coordinate Zn(2+). Residues 95-141 (QQIVNRCSGCRKKVGLTGFRCRCGELFCSEHRYSDRHDCSYDYKTAG) form an AN1-type zinc finger.

Its function is as follows. May be involved in environmental stress response. This chain is Zinc finger A20 and AN1 domain-containing stress-associated protein 5 (SAP5), found in Arabidopsis thaliana (Mouse-ear cress).